A 517-amino-acid polypeptide reads, in one-letter code: GMP synthase [glutamine-hydrolyzing] (517 aa).

The region spanning 11 to 202 (KIIVLDFGSQ…AFDVCEAKAN (192 aa)) is the Glutamine amidotransferase type-1 domain. Cysteine 88 (nucleophile) is an active-site residue. Catalysis depends on residues histidine 176 and glutamate 178. The GMPS ATP-PPase domain maps to 203–392 (WSMNDFIDMQ…LGMPEDLVWR (190 aa)). 230–236 (SGGVDSS) provides a ligand contact to ATP.

Homodimer.

The enzyme catalyses XMP + L-glutamine + ATP + H2O = GMP + L-glutamate + AMP + diphosphate + 2 H(+). It participates in purine metabolism; GMP biosynthesis; GMP from XMP (L-Gln route): step 1/1. In terms of biological role, catalyzes the synthesis of GMP from XMP. This is GMP synthase [glutamine-hydrolyzing] from Pediococcus pentosaceus (strain ATCC 25745 / CCUG 21536 / LMG 10740 / 183-1w).